Consider the following 139-residue polypeptide: ATP synthase epsilon chain (139 aa).

The protein belongs to the ATPase epsilon chain family. F-type ATPases have 2 components, CF(1) - the catalytic core - and CF(0) - the membrane proton channel. CF(1) has five subunits: alpha(3), beta(3), gamma(1), delta(1), epsilon(1). CF(0) has three main subunits: a, b and c.

The protein resides in the cell membrane. Its function is as follows. Produces ATP from ADP in the presence of a proton gradient across the membrane. The sequence is that of ATP synthase epsilon chain from Symbiobacterium thermophilum (strain DSM 24528 / JCM 14929 / IAM 14863 / T).